Here is a 420-residue protein sequence, read N- to C-terminus: MSPPPLLQPLLLLLPLLNVEPSGATLIRIPLHRVQPGRRILNLLRGWREPAELPKLGAPSPGDKPIFVPLSNYRDVQYFGEIGLGTPPQNFTVAFDTGSSNLWVPSRRCHFFSVPCWLHHRFDPKASSSFQANGTKFAIQYGTGRVDGILSEDKLTIGGIKGASVIFGEALWEPSLVFAFAHFDGILGLGFPILSVEGVRPPMDVLVEQGLLDKPVFSFYLNRDPEEPDGGELVLGGSDPAHYIPPLTFVPVTVPAYWQIHMERVKVGPGLTLCAKGCAAILDTGTSLITGPTEEIRALHAAIGGIPLLAGEYIILCSEIPKLPAVSFLLGGVWFNLTAHDYVIQTTRNGVRLCLSGFQALDVPPPAGPFWILGDVFLGTYVAVFDRGDMKSSARVGLARARTRGADLGWGETAQAQFPG.

The signal sequence occupies residues 1 to 25 (MSPPPLLQPLLLLLPLLNVEPSGAT). A propeptide spans 26 to 63 (LIRIPLHRVQPGRRILNLLRGWREPAELPKLGAPSPGD) (activation peptide). Positions 78–399 (YFGEIGLGTP…MKSSARVGLA (322 aa)) constitute a Peptidase A1 domain. N90 carries an N-linked (GlcNAc...) asparagine glycan. Residue D96 is part of the active site. An intrachain disulfide couples C109 to C116. An N-linked (GlcNAc...) asparagine glycan is attached at N133. An intrachain disulfide couples C274 to C278. D283 is a catalytic residue. A disulfide bridge connects residues C317 and C354. N-linked (GlcNAc...) asparagine glycosylation is present at N336.

It belongs to the peptidase A1 family. Expressed predominantly in adult lung (type II pneumocytes) and kidney and in fetal lung. Low levels in adult spleen and very low levels in peripheral blood leukocytes.

It localises to the secreted. In terms of biological role, may be involved in processing of pneumocyte surfactant precursors. The sequence is that of Napsin-A (NAPSA) from Homo sapiens (Human).